The following is a 918-amino-acid chain: Dual serine/threonine and tyrosine protein kinase (918 aa).

Basic and acidic residues predominate over residues 1–19 (MQKDGTRSSRRMEEGDRRN). Residues 1–29 (MQKDGTRSSRRMEEGDRRNGSTGSSGSVS) form a disordered region. Residues 643–897 (PRIGRELGRG…PLMGIVQPML (255 aa)) enclose the Protein kinase domain. ATP contacts are provided by residues 649–657 (LGRGQYGVV) and K672. Catalysis depends on D768, which acts as the Proton acceptor.

This sequence belongs to the protein kinase superfamily. Ser/Thr protein kinase family.

It is found in the cytoplasm. It localises to the cell membrane. The protein localises to the apical cell membrane. Its subcellular location is the basolateral cell membrane. The protein resides in the cell junction. It carries out the reaction L-seryl-[protein] + ATP = O-phospho-L-seryl-[protein] + ADP + H(+). The catalysed reaction is L-threonyl-[protein] + ATP = O-phospho-L-threonyl-[protein] + ADP + H(+). It catalyses the reaction L-tyrosyl-[protein] + ATP = O-phospho-L-tyrosyl-[protein] + ADP + H(+). Its function is as follows. May act as a positive regulator of ERK phosphorylation downstream of fibroblast growth factor-receptor activation. May induce both caspase-dependent apoptosis and caspase-independent cell death. May play a role in the embryonic development. In Xenopus tropicalis (Western clawed frog), this protein is Dual serine/threonine and tyrosine protein kinase (dstyk).